A 38-amino-acid polypeptide reads, in one-letter code: MTQSNPNEQNVELNRTSLYWGLLLIFVLAILFSNYFFN.

The helical transmembrane segment at 17-37 (SLYWGLLLIFVLAILFSNYFF) threads the bilayer.

Belongs to the PsbL family. As to quaternary structure, PSII is composed of 1 copy each of membrane proteins PsbA, PsbB, PsbC, PsbD, PsbE, PsbF, PsbH, PsbI, PsbJ, PsbK, PsbL, PsbM, PsbT, PsbX, PsbY, PsbZ, Psb30/Ycf12, at least 3 peripheral proteins of the oxygen-evolving complex and a large number of cofactors. It forms dimeric complexes.

Its subcellular location is the plastid. It is found in the chloroplast thylakoid membrane. One of the components of the core complex of photosystem II (PSII). PSII is a light-driven water:plastoquinone oxidoreductase that uses light energy to abstract electrons from H(2)O, generating O(2) and a proton gradient subsequently used for ATP formation. It consists of a core antenna complex that captures photons, and an electron transfer chain that converts photonic excitation into a charge separation. This subunit is found at the monomer-monomer interface and is required for correct PSII assembly and/or dimerization. This is Photosystem II reaction center protein L from Aethionema cordifolium (Lebanon stonecress).